The sequence spans 657 residues: Pyoverdine export ATP-binding/permease protein PvdT (657 aa).

The ABC transporter domain maps to 6–245 (IDLRNIRKSY…LSANAGALQA (240 aa)). ATP is bound at residue 43–50 (GASGSGKS). Transmembrane regions (helical) follow at residues 285–305 (ALTLLGIIIGVASVVVMLAVG), 532–552 (LSLMLGAIAAISLLVGGIGVM), 590–610 (LSVVGGLAGIGVALIIGGILI), and 620–640 (LAAVLGAFACALVTGVIFGFM).

This sequence belongs to the ABC transporter superfamily. Macrolide exporter (TC 3.A.1.122) family. As to quaternary structure, part of the tripartite efflux system PvdRT-OpmQ, which is composed of an inner membrane component with both ATPase and permease domains, PvdT, a periplasmic membrane fusion protein, PvdR, and an outer membrane component, OpmQ.

The protein resides in the cell inner membrane. Functionally, part of the tripartite efflux system PvdRT-OpmQ required for the secretion into the extracellular milieu of the siderophore pyoverdine (PVD), which is involved in iron acquisition. This subunit binds PVD and drives its secretion by hydrolyzing ATP. The system is responsible for export of newly synthesized PVD after the final steps of biosynthesis have taken place in the periplasm. It is also responsible for recycling of PVD after internalization of ferri-PVD into the periplasm by the outer-membrane receptor FpvA and release of iron from PVD, thus making PVD available for new cycles of iron uptake. This is Pyoverdine export ATP-binding/permease protein PvdT from Pseudomonas fluorescens (strain ATCC BAA-477 / NRRL B-23932 / Pf-5).